The following is a 243-amino-acid chain: Probable glycerol uptake facilitator protein (243 aa).

2 helical membrane passes run 7–27 (ILLGELIGTMVLIILGNGVCA) and 44–64 (LLIALGWGFAVFCGVVISIQV). An NPA 1 motif is present at residues 72-74 (NPA). The next 3 helical transmembrane spans lie at 88 to 108 (IGLLFAMIAMQLLGAMIAQII), 143 to 163 (ISYEMLGTMILLAGVMAGDYH), and 166 to 186 (TGVFFVMAIVMSLGSVTGCAI). Residues 187 to 189 (NPA) carry the NPA 2 motif. The chain crosses the membrane as a helical span at residues 221 to 241 (LVPLLAPIAAGLIMGGFSLLI).

Belongs to the MIP/aquaporin (TC 1.A.8) family.

The protein resides in the cell membrane. It carries out the reaction glycerol(in) = glycerol(out). Its function is as follows. Mediates glycerol diffusion across the cytoplasmic membrane via a pore-type mechanism. The chain is Probable glycerol uptake facilitator protein (glpF) from Mycoplasmoides gallisepticum (strain R(low / passage 15 / clone 2)) (Mycoplasma gallisepticum).